We begin with the raw amino-acid sequence, 488 residues long: MTADGKIVIVGGGPVGSLAALYASHYHDNVEVYELRDERQNPAGASPLLQKSINFTLSERGIRALEKSGRTDLLRAIMRTAIPMHGRMVHGRMVHGRSVSGKLQETFHQYDVHGNSLYSLDRKALNIALRQELDATPNVKMFFHHKLIRADMNTRKVWFEQREDPSTSTSPSTSSTPKEVPFDFLIGADGAHSTTRQQIMRYTPLDYQQQYADTVWCELRIPPTEKTNSFRLPPNYLHIWPGGEYMFCAFPCPDQSFNCILFAPASRLDALKSSPPATLFDFFDTHFPGVCPDLISQSSLSQQFYQSPHLPLIGIKCSPHHLGSAAVIIGDAAHAMFPFYGQGLNAGMEDVRILFDLLDEHRVFGHGKSLDKDHARAAALTEYSNQRVRDAHAIHDLSRRNYLELRGGVNSPVYKARKFVEEALQRYVPLLGWRTLYSRVSFSDQRYSEVVVKNELQGWVLLLMSGLGVLLHVLVFGALGGAFLGLKR.

Belongs to the aromatic-ring hydroxylase family. KMO subfamily. The cofactor is FAD.

The protein resides in the mitochondrion outer membrane. The enzyme catalyses L-kynurenine + NADPH + O2 + H(+) = 3-hydroxy-L-kynurenine + NADP(+) + H2O. Its pathway is cofactor biosynthesis; NAD(+) biosynthesis; quinolinate from L-kynurenine: step 1/3. In terms of biological role, catalyzes the hydroxylation of L-kynurenine (L-Kyn) to form 3-hydroxy-L-kynurenine (L-3OHKyn). Required for synthesis of quinolinic acid. This Aspergillus niger (strain ATCC MYA-4892 / CBS 513.88 / FGSC A1513) protein is Kynurenine 3-monooxygenase 2 (bna4-2).